A 567-amino-acid polypeptide reads, in one-letter code: Ran-binding protein 3 (567 aa).

A compositionally biased stretch (basic and acidic residues) spans 1–10 (MADLANEEKP). Disordered regions lie at residues 1–263 (MADL…FVFG), 332–373 (LSPP…AESA), and 515–567 (VEQE…TGST). N-acetylalanine is present on A2. Residues K9 and K21 each carry the N6-acetyllysine modification. Residues 39–49 (EEPRGEAEAPH) are compositionally biased toward basic and acidic residues. T75 carries the post-translational modification Phosphothreonine. Over residues 75–89 (TPPPPAPEAQLPPFP) the composition is skewed to pro residues. Residues S100, S101, and S108 each carry the phosphoserine modification. The Nuclear localization signal motif lies at 117–125 (PPVKRERTS). A Phosphothreonine modification is found at T124. Composition is skewed to polar residues over residues 125–134 (SSLTQFPPSQ) and 184–197 (ALSQ…TNGV). S126 carries the phosphoserine modification. A phosphoserine mark is found at S219, S333, S353, S355, and S372. Positions 347-362 (ENAAAESGSESSSQEA) are enriched in low complexity. Residues 378-518 (KATARKCLLE…LALRSRVEQE (141 aa)) enclose the RanBD1 domain. Acidic residues predominate over residues 534 to 544 (NEEDDSDDDDV). Position 539 is a phosphoserine (S539). Positions 549–567 (GATAAGAGDEGDGQTTGST) are enriched in low complexity.

Interacts with CHC1 in a Ran-stimulated manner. Interacts with XPO1. Interacts (via its C-terminal R domain) with SMAD2 (dephosphorylated form via its MH1 and MH2 domains); the interaction results in the nuclear export of SMAD2 and termination of the TGF-beta signaling. Interacts (via its C-terminal R domain) with SMAD3 (dephosphorylated form via its MH1 domain); the interaction results in the nuclear export of SMAD3 and termination of the TGF-beta signaling. In terms of processing, phosphorylation at Ser-126 promotes its import into the nucleus. In terms of tissue distribution, widely expressed with high levels in testis and heart.

The protein localises to the cytoplasm. It is found in the nucleus. Its function is as follows. Acts as a cofactor for XPO1/CRM1-mediated nuclear export, perhaps as export complex scaffolding protein. Bound to XPO1/CRM1, stabilizes the XPO1/CRM1-cargo interaction. In the absence of Ran-bound GTP prevents binding of XPO1/CRM1 to the nuclear pore complex. Binds to CHC1/RCC1 and increases the guanine nucleotide exchange activity of CHC1/RCC1. Recruits XPO1/CRM1 to CHC1/RCC1 in a Ran-dependent manner. Negative regulator of TGF-beta signaling through interaction with the R-SMAD proteins, SMAD2 and SMAD3, and mediating their nuclear export. This Homo sapiens (Human) protein is Ran-binding protein 3 (RANBP3).